Here is a 307-residue protein sequence, read N- to C-terminus: tRNA N6-adenosine threonylcarbamoyltransferase (307 aa).

Positions 108 and 112 each coordinate Fe cation. Residues 131 to 135, D164, G177, D181, and N266 each bind substrate; that span reads IVSGG. D290 contacts Fe cation.

It belongs to the KAE1 / TsaD family. The cofactor is Fe(2+).

It localises to the cytoplasm. It carries out the reaction L-threonylcarbamoyladenylate + adenosine(37) in tRNA = N(6)-L-threonylcarbamoyladenosine(37) in tRNA + AMP + H(+). Required for the formation of a threonylcarbamoyl group on adenosine at position 37 (t(6)A37) in tRNAs that read codons beginning with adenine. Is involved in the transfer of the threonylcarbamoyl moiety of threonylcarbamoyl-AMP (TC-AMP) to the N6 group of A37, together with TsaE and TsaB. TsaD likely plays a direct catalytic role in this reaction. This Mycoplasmopsis synoviae (strain 53) (Mycoplasma synoviae) protein is tRNA N6-adenosine threonylcarbamoyltransferase.